The sequence spans 488 residues: Glutamate--tRNA ligase (488 aa).

Residues 16–26 (PSPTGEPHVGT) carry the 'HIGH' region motif. Residues 257–261 (KLSKR) carry the 'KMSKS' region motif. Residue K260 coordinates ATP.

It belongs to the class-I aminoacyl-tRNA synthetase family. Glutamate--tRNA ligase type 1 subfamily. As to quaternary structure, monomer.

The protein resides in the cytoplasm. The enzyme catalyses tRNA(Glu) + L-glutamate + ATP = L-glutamyl-tRNA(Glu) + AMP + diphosphate. Functionally, catalyzes the attachment of glutamate to tRNA(Glu) in a two-step reaction: glutamate is first activated by ATP to form Glu-AMP and then transferred to the acceptor end of tRNA(Glu). The polypeptide is Glutamate--tRNA ligase (Rhizobium johnstonii (strain DSM 114642 / LMG 32736 / 3841) (Rhizobium leguminosarum bv. viciae)).